A 276-amino-acid chain; its full sequence is Large ribosomal subunit protein uL2 (276 aa).

Residues 223–276 are disordered; that stretch reads GVAMNPVDHPHGGGEGRGKGHHPTSPWGLPTKGYKTRRGKRPSDKFIVRRRNEA. Basic and acidic residues-rich tracts occupy residues 230 to 240 and 263 to 276; these read DHPHGGGEGRG and RPSD…RNEA.

It belongs to the universal ribosomal protein uL2 family. Part of the 50S ribosomal subunit. Forms a bridge to the 30S subunit in the 70S ribosome.

One of the primary rRNA binding proteins. Required for association of the 30S and 50S subunits to form the 70S ribosome, for tRNA binding and peptide bond formation. It has been suggested to have peptidyltransferase activity; this is somewhat controversial. Makes several contacts with the 16S rRNA in the 70S ribosome. The polypeptide is Large ribosomal subunit protein uL2 (Thermotoga petrophila (strain ATCC BAA-488 / DSM 13995 / JCM 10881 / RKU-1)).